A 380-amino-acid polypeptide reads, in one-letter code: Cytoplasmic protein NCK2 (380 aa).

Position 2 is an N-acetylthreonine (threonine 2). In terms of domain architecture, SH3 1 spans 2–61; the sequence is TEEVIVIAKWDYTAQQDQELDIKKNERLWLLDDSKTWWRVRNAANRTGYVPSNYVERKNS. Residues 79–102 form a disordered region; the sequence is KTRRKTSARDASPTPSTDAEYPAN. Position 90 is a phosphoserine (serine 90). Threonine 92 is subject to Phosphothreonine. Serine 94 carries the post-translational modification Phosphoserine. Residue tyrosine 110 is modified to Phosphotyrosine. SH3 domains follow at residues 111–170 and 195–257; these read DLNI…EEVD and RVLH…VLSD. Residues 285–380 enclose the SH2 domain; sequence WYYGNVTRHQ…EKLYLVRALQ (96 aa).

As to quaternary structure, interacts with DOCK1, LIMS1 and TGFB1I1. Part of a complex containing PPP1R15B, PP1 and NCK2. Interacts with FASLG. Interacts with AXL. Interacts with PAK1, PKN2 and SOS1. Interacts (via SH2 domain) with EGFR. Interacts (via SH2 domain) with DDR1. Interacts with IRS1. In terms of processing, phosphorylated. In terms of tissue distribution, ubiquitous.

The protein resides in the cytoplasm. The protein localises to the endoplasmic reticulum. Adapter protein which associates with tyrosine-phosphorylated growth factor receptors or their cellular substrates. Maintains low levels of EIF2S1 phosphorylation by promoting its dephosphorylation by PP1. Plays a role in ELK1-dependent transcriptional activation in response to activated Ras signaling. This Homo sapiens (Human) protein is Cytoplasmic protein NCK2 (NCK2).